Reading from the N-terminus, the 1106-residue chain is Inversin (1106 aa).

ANK repeat units follow at residues serine 13–aspartate 42, phenylalanine 47–arginine 76, serine 80–lysine 110, glutamate 113–threonine 144, asparagine 148–isoleucine 177, glutamate 181–leucine 213, glutamate 220–serine 250, leucine 254–serine 285, glutamine 288–aspartate 317, glutamate 321–isoleucine 350, tyrosine 356–alanine 385, methionine 389–leucine 418, aspartate 422–valine 451, alanine 455–isoleucine 484, glutamate 488–histidine 517, and glutamate 523–alanine 553. The short motif at arginine 490–asparagine 498 is the D-box 1 element. An IQ 1 domain is found at glutamine 555–lysine 584. Basic and acidic residues predominate over residues arginine 589–serine 607. Disordered stretches follow at residues arginine 589 to methionine 615, leucine 636 to serine 688, alanine 746 to glycine 782, and alanine 809 to alanine 833. 2 stretches are compositionally biased toward polar residues: residues leucine 636–leucine 645 and valine 653–glycine 666. A compositionally biased stretch (basic residues) spans lysine 812–histidine 822. The short motif at arginine 944–asparagine 952 is the D-box 2 element. The 30-residue stretch at lysine 951 to glutamine 980 folds into the IQ 2 domain.

In terms of assembly, binds calmodulin via its IQ domains. Interacts with APC2.

The protein localises to the cytoplasm. The protein resides in the cytoskeleton. Functionally, required for normal renal development and establishment of left-right axis. Probably acts as a molecular switch between different Wnt signaling pathways. Inhibits the canonical Wnt pathway by targeting cytoplasmic disheveled for degradation by the ubiquitin-proteasome. This suggests that it is required in renal development to oppose the repression of terminal differentiation of tubular epithelial cells by Wnt signaling. In Gallus gallus (Chicken), this protein is Inversin (INVS).